The sequence spans 385 residues: Na(+)/H(+) antiporter NhaA (385 aa).

A run of 11 helical transmembrane segments spans residues 9–29 (YSAI…NVLD), 45–65 (IFGL…VFFF), 87–107 (IIPG…YLSV), 114–134 (GWPV…AIFG), 155–175 (AGIV…WIIV), 198–218 (TFLI…SVYQ), 220–235 (GIHA…IMLN), 245–265 (ALEP…AAMV), 282–302 (ILLG…IIAL), 312–332 (FFNL…SLLM), and 345–365 (QGVI…IILM).

It belongs to the NhaA Na(+)/H(+) (TC 2.A.33) antiporter family.

It localises to the cell membrane. The enzyme catalyses Na(+)(in) + 2 H(+)(out) = Na(+)(out) + 2 H(+)(in). Its function is as follows. Na(+)/H(+) antiporter that extrudes sodium in exchange for external protons. This chain is Na(+)/H(+) antiporter NhaA, found in Tropheryma whipplei (strain Twist) (Whipple's bacillus).